The primary structure comprises 317 residues: uncharacterized protein (317 aa).

Helical transmembrane passes span 24 to 44, 63 to 83, 136 to 156, 187 to 207, 229 to 249, 252 to 272, and 295 to 315; these read ISII…TGIM, LSIS…SILA, LGVA…ISED, LIPI…IGFF, ILAL…GGFL, GILS…LTFS, and IVMV…AGLL.

The protein to M.jannaschii MJ0880, MJ1556 and MJ1589.

It is found in the cell membrane. This is an uncharacterized protein from Methanocaldococcus jannaschii (strain ATCC 43067 / DSM 2661 / JAL-1 / JCM 10045 / NBRC 100440) (Methanococcus jannaschii).